Reading from the N-terminus, the 767-residue chain is MSGDHLHNDSQIEADFRLNDSHKHKDKHKDREHRHKEHKKDKEKDREKSKHSNSEHKDSEKKHKEKEKTKHKDGSSEKHKDKHKDRDKEKRKEEKVRASGDAKIKKEKENGFSSPPQIKDEPEDDGYFVPPKEDIKPLKRPRDEDDADYKPKKIKTEDIKKEKKRKLEEEEDGKLRKPKNKDKDKKVPEPDNKKKKPKKEEEQKWKWWEEERYPEGIKWKFLEHKGPVFAPPYEPLPDSVKFYYDGKVMKLSPKAEEVATFFAKMLDHEYTTKEIFRKNFFKDWRKEMTNEEKNIITNLSKCDFTQMSQYFKAQTEARKQMSKEEKLKIKEENEKLLKEYGFCIMDNHKERIANFKIEPPGLFRGRGNHPKMGMLKRRIMPEDIIINCSKDAKVPSPPPGHKWKEVRHDNKVTWLVSWTENIQGSIKYIMLNPSSRIKGEKDWQKYETARRLKKCVDKIRNQYREDWKSKEMKVRQRAVALYFIDKLALRAGNEKEEGETADTVGCCSLRVEHINLHPELDGQEYVVEFDFLGKDSIRYYNKVPVEKRVFKNLQLFMENKQPEDDLFDRLNTGILNKHLQDLMEGLTAKVFRTYNASITLQQQLKELTAPDENIPAKILSYNRANRAVAILCNHQRAPPKTFEKSMMNLQSKIDAKKEQLADARRDLKSAKADAKVMKDAKTKKVVESKKKAVQRLEEQLMKLEVQATDREENKQIALGTSKLNYLDPRITVAWCKKWGVPIEKIYNKTQREKFAWAIDMADEDYEF.

Residues 1-23 show a composition bias toward basic and acidic residues; that stretch reads MSGDHLHNDSQIEADFRLNDSHK. The disordered stretch occupies residues 1–201; that stretch reads MSGDHLHNDS…NKKKKPKKEE (201 aa). Ser2 bears the N-acetylserine mark. Residues Ser2 and Ser10 each carry the phosphoserine modification. Over residues 24 to 39 the composition is skewed to basic residues; sequence HKDKHKDREHRHKEHK. A compositionally biased stretch (basic and acidic residues) spans 40 to 110; sequence KDKEKDREKS…DAKIKKEKEN (71 aa). At Ser59 the chain carries Phosphoserine. Lys103 is covalently cross-linked (Glycyl lysine isopeptide (Lys-Gly) (interchain with G-Cter in SUMO2)). A Glycyl lysine isopeptide (Lys-Gly) (interchain with G-Cter in SUMO); alternate cross-link involves residue Lys105. Lys105 participates in a covalent cross-link: Glycyl lysine isopeptide (Lys-Gly) (interchain with G-Cter in SUMO2); alternate. Ser114 carries the phosphoserine modification. Lys119 participates in a covalent cross-link: Glycyl lysine isopeptide (Lys-Gly) (interchain with G-Cter in SUMO); alternate. Lys119 participates in a covalent cross-link: Glycyl lysine isopeptide (Lys-Gly) (interchain with G-Cter in SUMO2); alternate. Residue Lys119 forms a Glycyl lysine isopeptide (Lys-Gly) (interchain with G-Cter in SUMO1); alternate linkage. The span at 131–168 shows a compositional bias: basic and acidic residues; it reads PKEDIKPLKRPRDEDDADYKPKKIKTEDIKKEKKRKLE. Residues Lys136 and Lys150 each participate in a glycyl lysine isopeptide (Lys-Gly) (interchain with G-Cter in SUMO2) cross-link. Residue Lys155 forms a Glycyl lysine isopeptide (Lys-Gly) (interchain with G-Cter in SUMO); alternate linkage. A Glycyl lysine isopeptide (Lys-Gly) (interchain with G-Cter in SUMO2); alternate cross-link involves residue Lys155. Residues Lys160 and Lys166 each participate in a glycyl lysine isopeptide (Lys-Gly) (interchain with G-Cter in SUMO2) cross-link. A Glycyl lysine isopeptide (Lys-Gly) (interchain with G-Cter in SUMO2); alternate cross-link involves residue Lys174. Residue Lys174 is modified to N6-acetyllysine; alternate. Residues 181 to 201 are compositionally biased toward basic and acidic residues; that stretch reads KDKDKKVPEPDNKKKKPKKEE. Lys206 is covalently cross-linked (Glycyl lysine isopeptide (Lys-Gly) (interchain with G-Cter in SUMO2)). Lys282 carries the post-translational modification N6-acetyllysine. A Glycyl lysine isopeptide (Lys-Gly) (interchain with G-Cter in SUMO2) cross-link involves residue Lys338. Interaction with DNA stretches follow at residues 427 to 428 and 490 to 495; these read KY and RAGNEK. The 334-residue stretch at 434-767 folds into the Topo IB-type catalytic domain; that stretch reads SSRIKGEKDW…IDMADEDYEF (334 aa). Ser508 is modified (phosphoserine; by CK2). Lys551 participates in a covalent cross-link: Glycyl lysine isopeptide (Lys-Gly) (interchain with G-Cter in SUMO2). The interaction with DNA stretch occupies residues 587–589; the sequence is TAK. Glycyl lysine isopeptide (Lys-Gly) (interchain with G-Cter in SUMO2) cross-links involve residues Lys644, Lys702, and Lys714. The active-site O-(3'-phospho-DNA)-tyrosine intermediate is the Tyr725.

It belongs to the type IB topoisomerase family. As to quaternary structure, monomer. Interacts with ERCC6. Interacts with TPRN; TPRN interacts with a number of DNA damage response proteins, is recruited to sites of DNA damage and may play a role in DNA damage repair. Post-translationally, sumoylated. Lys-119 is the main site of sumoylation. Sumoylation plays a role in partitioning TOP1 between nucleoli and nucleoplasm. Levels are dramatically increased on camptothecin (CPT) treatment. In terms of processing, phosphorylation at Ser-508 by CK2 increases binding to supercoiled DNA and sensitivity to camptothecin.

Its subcellular location is the nucleus. It localises to the nucleolus. The protein resides in the nucleoplasm. It catalyses the reaction ATP-independent breakage of single-stranded DNA, followed by passage and rejoining.. With respect to regulation, specifically inhibited by camptothecin (CPT), a plant alkaloid with antitumor activity. Its function is as follows. Releases the supercoiling and torsional tension of DNA introduced during the DNA replication and transcription by transiently cleaving and rejoining one strand of the DNA duplex. Introduces a single-strand break via transesterification at a target site in duplex DNA. The scissile phosphodiester is attacked by the catalytic tyrosine of the enzyme, resulting in the formation of a DNA-(3'-phosphotyrosyl)-enzyme intermediate and the expulsion of a 5'-OH DNA strand. The free DNA strand then rotates around the intact phosphodiester bond on the opposing strand, thus removing DNA supercoils. Finally, in the religation step, the DNA 5'-OH attacks the covalent intermediate to expel the active-site tyrosine and restore the DNA phosphodiester backbone. Regulates the alternative splicing of tissue factor (F3) pre-mRNA in endothelial cells. Involved in the circadian transcription of the core circadian clock component BMAL1 by altering the chromatin structure around the ROR response elements (ROREs) on the BMAL1 promoter. The sequence is that of DNA topoisomerase 1 (TOP1) from Chlorocebus aethiops (Green monkey).